The following is a 258-amino-acid chain: Ditrans,polycis-undecaprenyl-diphosphate synthase ((2E,6E)-farnesyl-diphosphate specific) (258 aa).

Residue Asp-24 is part of the active site. Residue Asp-24 participates in Mg(2+) binding. Residues 25-28 (GNGR), Trp-29, Arg-37, His-41, and 69-71 (SSE) contribute to the substrate site. Asn-72 acts as the Proton acceptor in catalysis. Residues Trp-73, Arg-75, Arg-192, and 198-200 (RIS) contribute to the substrate site. A Mg(2+)-binding site is contributed by Glu-211.

This sequence belongs to the UPP synthase family. Homodimer. Mg(2+) is required as a cofactor.

It carries out the reaction 8 isopentenyl diphosphate + (2E,6E)-farnesyl diphosphate = di-trans,octa-cis-undecaprenyl diphosphate + 8 diphosphate. Its function is as follows. Catalyzes the sequential condensation of isopentenyl diphosphate (IPP) with (2E,6E)-farnesyl diphosphate (E,E-FPP) to yield (2Z,6Z,10Z,14Z,18Z,22Z,26Z,30Z,34E,38E)-undecaprenyl diphosphate (di-trans,octa-cis-UPP). UPP is the precursor of glycosyl carrier lipid in the biosynthesis of bacterial cell wall polysaccharide components such as peptidoglycan and lipopolysaccharide. This is Ditrans,polycis-undecaprenyl-diphosphate synthase ((2E,6E)-farnesyl-diphosphate specific) from Xanthomonas oryzae pv. oryzae (strain KACC10331 / KXO85).